The primary structure comprises 256 residues: 6-carboxyhexanoate--CoA ligase (256 aa).

It belongs to the BioW family. In terms of assembly, homodimer. Mg(2+) is required as a cofactor.

The catalysed reaction is heptanedioate + ATP + CoA = 6-carboxyhexanoyl-CoA + AMP + diphosphate. Its pathway is metabolic intermediate metabolism; pimeloyl-CoA biosynthesis; pimeloyl-CoA from pimelate: step 1/1. In terms of biological role, catalyzes the transformation of pimelate into pimeloyl-CoA with concomitant hydrolysis of ATP to AMP. The protein is 6-carboxyhexanoate--CoA ligase of Bacillus velezensis (strain DSM 23117 / BGSC 10A6 / LMG 26770 / FZB42) (Bacillus amyloliquefaciens subsp. plantarum).